Reading from the N-terminus, the 1420-residue chain is MWNSAENAFSRSTSFKDEIEDEEELRWAALQRLPTYSRIRRGIFRDMVGEPKEIQIGNLEASEQRLLLDRLVNSVENDPEQFFARVRKRFDAVDLKFPKIEVRFQNLMVESFVHVGSRALPTIPNFIINMAEGLLRNIHVIGGKRNKLTILDGISGVIRPSRLTLLLGPPSSGKTTLLLALAGRLGTNLQTSGKITYNGYDLKEIIAPRTSAYVSQQDWHVAEMTVRQTLEFAGRCQGVGFKYDMLLELARREKLAGIVPDEDLDIFMKSLALGGMETSLVVEYVMKILGLDTCADTLVGDEMIKGISGGQKKRLTTGELLVGPARVLFMDEISNGLDSSTTHQIIMYMRHSTHALEGTTVISLLQPSPETYELFDDVILMSEGQIIYQGPRDEVLDFFSSLGFTCPDRKNVADFLQEVTSKKDQQQYWSVPFRPYRYVPPGKFAEAFRSYPTGKKLAKKLEVPFDKRFNHSAALSTSQYGVKKSELLKINFAWQKQLMKQNAFIYVFKFVQLLLVALITMTVFCRTTMHHNTIDDGNIYLGSLYFSMVIILFNGFTEVPMLVAKLPVLYKHRDLHFYPSWAYTLPSWLLSIPTSIIESATWVAVTYYTIGYDPLFSRFLQQFLLYFSLHQMSLGLFRVMGSLGRHMIVANTFGSFAMLVVMTLGGFIISRDSIPSWWIWGYWISPLMYAQNAASVNEFLGHNWQKTAGNHTSDSLGLALLKERSLFSGNYWYWIGVAALLGYTVLFNILFTLFLAHLNPWGKFQAVVSREELDEREKKRKGDEFVVELREYLQHSGSIHGKYFKNRGMVLPFQPLSLSFSNINYYVDVPLGLKEQGILEDRLQLLVNITGAFRPGVLTALVGVSGAGKTTLMDVLAGRKTGGTIEGDVYISGFPKRQETFARISGYCEQNDVHSPCLTVVESLLFSACLRLPADIDSETQRAFVHEVMELVELTSLSGALVGLPGVDGLSTEQRKRLTIAVELVANPSIVFMDEPTSGLDARAAAIVMRTVRNIVNTGRTIVCTIHQPSIDIFESFDELLFMKRGGELIYAGPLGQKSCELIKYFESIEGVQKIKPGHNPAAWMLDVTASTEEHRLGVDFAEIYRNSNLCQRNKELIEVLSKPSNIAKEIEFPTRYSQSLYSQFVACLWKQNLSYWRNPQYTAVRFFYTVVISLMLGTICWKFGSKRDTQQQLFNAMGSMYAAVLFIGITNATAAQPVVSIERFVSYRERAAGMYSALPFAFAQVFIEFPYVLAQSTIYSTIFYAMAAFEWSAVKFLWYLFFMYFSIMYFTFYGMMTTAITPNHNVASIIAAPFYMLWNLFSGFMIPYKRIPLWWRWYYWANPVAWTLYGLLVSQYGDDERSVKLSDGIHQVMVKQLLEDVMGYKHDFLGVSAIMVVAFCVFFSLVFAFAIKAFNFQRR.

The ABC transporter 1 domain maps to 135 to 408 (LRNIHVIGGK…FSSLGFTCPD (274 aa)). Residue 168-175 (GPPSSGKT) participates in ATP binding. Residues 486–699 (ELLKINFAWQ…AQNAASVNEF (214 aa)) enclose the ABC transmembrane type-2 1 domain. 7 helical membrane-spanning segments follow: residues 504 to 524 (FIYV…MTVF), 544 to 564 (LYFS…MLVA), 585 to 605 (LPSW…WVAV), 623 to 643 (FLLY…MGSL), 648 to 668 (IVAN…GGFI), 674 to 694 (IPSW…QNAA), and 735 to 755 (IGVA…TLFL). Positions 818 to 1070 (LSFSNINYYV…ELIKYFESIE (253 aa)) constitute an ABC transporter 2 domain. An ATP-binding site is contributed by 863–870 (GVSGAGKT). One can recognise an ABC transmembrane type-2 2 domain in the interval 1143–1357 (SQFVACLWKQ…TLYGLLVSQY (215 aa)). 7 consecutive transmembrane segments (helical) span residues 1162–1182 (YTAV…TICW), 1202–1222 (YAAV…VVSI), 1235–1255 (MYSA…YVLA), 1277–1297 (FLWY…YGMM), 1307–1327 (VASI…GFMI), 1334–1354 (LWWR…GLLV), and 1392–1412 (VSAI…AFAI).

Belongs to the ABC transporter superfamily. ABCG family. PDR (TC 3.A.1.205) subfamily. Ubiquitous in aerial organs. Higher expression levels in young, expanding tissues than in older tissues. Detected in the epidermal layer.

The protein resides in the cell membrane. Functionally, may be a general defense protein. Required for the formation of the cuticle layer of the cell wall. The sequence is that of ABC transporter G family member 32 from Arabidopsis thaliana (Mouse-ear cress).